A 485-amino-acid chain; its full sequence is Glutamyl-tRNA(Gln) amidotransferase subunit A (485 aa).

Residues K80 and S155 each act as charge relay system in the active site. Residue S179 is the Acyl-ester intermediate of the active site.

The protein belongs to the amidase family. GatA subfamily. In terms of assembly, heterotrimer of A, B and C subunits.

It carries out the reaction L-glutamyl-tRNA(Gln) + L-glutamine + ATP + H2O = L-glutaminyl-tRNA(Gln) + L-glutamate + ADP + phosphate + H(+). In terms of biological role, allows the formation of correctly charged Gln-tRNA(Gln) through the transamidation of misacylated Glu-tRNA(Gln) in organisms which lack glutaminyl-tRNA synthetase. The reaction takes place in the presence of glutamine and ATP through an activated gamma-phospho-Glu-tRNA(Gln). The chain is Glutamyl-tRNA(Gln) amidotransferase subunit A from Leptospira borgpetersenii serovar Hardjo-bovis (strain L550).